Reading from the N-terminus, the 213-residue chain is Thiopurine S-methyltransferase (213 aa).

S-adenosyl-L-methionine-binding residues include Trp-10, Leu-45, Glu-66, and Arg-121.

The protein belongs to the class I-like SAM-binding methyltransferase superfamily. TPMT family.

The protein resides in the cytoplasm. It catalyses the reaction S-adenosyl-L-methionine + a thiopurine = S-adenosyl-L-homocysteine + a thiopurine S-methylether.. This chain is Thiopurine S-methyltransferase, found in Aliivibrio fischeri (strain MJ11) (Vibrio fischeri).